A 320-amino-acid chain; its full sequence is Malate dehydrogenase (320 aa).

Residues 10-15 (GAGQIG) and Asp-34 each bind NAD(+). Positions 83 and 89 each coordinate substrate. NAD(+)-binding positions include Asn-96 and 119 to 121 (ITN). Positions 121 and 152 each coordinate substrate. The Proton acceptor role is filled by His-176.

It belongs to the LDH/MDH superfamily. MDH type 3 family.

It catalyses the reaction (S)-malate + NAD(+) = oxaloacetate + NADH + H(+). In terms of biological role, catalyzes the reversible oxidation of malate to oxaloacetate. This Methylobacterium sp. (strain 4-46) protein is Malate dehydrogenase.